Reading from the N-terminus, the 556-residue chain is uncharacterized protein (556 aa).

Disordered stretches follow at residues M1 to N40, N80 to W243, Y278 to P324, R363 to D391, and D422 to A525. Positions N7–N25 are enriched in low complexity. A compositionally biased stretch (acidic residues) spans E30–N40. 2 stretches are compositionally biased toward low complexity: residues N80 to S133 and N164 to N181. Over residues I182 to F192 the composition is skewed to acidic residues. A compositionally biased stretch (low complexity) spans S207 to S226. A compositionally biased stretch (polar residues) spans K227–W243. Composition is skewed to low complexity over residues N292 to S322, K369 to K388, and Q425 to A525. The chain crosses the membrane as a helical span at residues G528 to F548.

Its subcellular location is the membrane. This is an uncharacterized protein from Dictyostelium discoideum (Social amoeba).